The primary structure comprises 530 residues: Bifunctional purine biosynthesis protein PurH (530 aa).

Residues 1-148 (MNNARPIRRA…KNHKDVTIVV (148 aa)) enclose the MGS-like domain.

Belongs to the PurH family.

It carries out the reaction (6R)-10-formyltetrahydrofolate + 5-amino-1-(5-phospho-beta-D-ribosyl)imidazole-4-carboxamide = 5-formamido-1-(5-phospho-D-ribosyl)imidazole-4-carboxamide + (6S)-5,6,7,8-tetrahydrofolate. The catalysed reaction is IMP + H2O = 5-formamido-1-(5-phospho-D-ribosyl)imidazole-4-carboxamide. It participates in purine metabolism; IMP biosynthesis via de novo pathway; 5-formamido-1-(5-phospho-D-ribosyl)imidazole-4-carboxamide from 5-amino-1-(5-phospho-D-ribosyl)imidazole-4-carboxamide (10-formyl THF route): step 1/1. Its pathway is purine metabolism; IMP biosynthesis via de novo pathway; IMP from 5-formamido-1-(5-phospho-D-ribosyl)imidazole-4-carboxamide: step 1/1. This chain is Bifunctional purine biosynthesis protein PurH, found in Aliivibrio fischeri (strain MJ11) (Vibrio fischeri).